Here is a 223-residue protein sequence, read N- to C-terminus: PRA1 family protein B5 (223 aa).

Transmembrane regions (helical) follow at residues 83–103 (SSYFRVNYVCIVALILGFSLL), 105–125 (HPFSLILLLCLAASWLFLYLF), 146–166 (GGLILSTIAVIFFTSVGSVLI), 170–190 (MIGIATICVHGAFRAPDDLFL), and 196–216 (AASGFLSFIGVPAIPSVAPSA).

Belongs to the PRA1 family. Interacts with PRA1B1, PRA1B2, PRA1B3, PRA1B4, PRA1B6 and PRA1E. Expressed in roots, lateral roots, lateral root caps, columella cells, leaves, and shoot apex.

The protein localises to the endosome membrane. Its function is as follows. May be involved in both secretory and endocytic intracellular trafficking in the endosomal/prevacuolar compartments. In Arabidopsis thaliana (Mouse-ear cress), this protein is PRA1 family protein B5 (PRA1B5).